The primary structure comprises 269 residues: Mitochondrial acidic protein mam33 (269 aa).

Belongs to the MAM33 family.

It is found in the cytoplasm. Its subcellular location is the mitochondrion matrix. The chain is Mitochondrial acidic protein mam33 from Schizosaccharomyces pombe (strain 972 / ATCC 24843) (Fission yeast).